The following is a 484-amino-acid chain: tRNA sulfurtransferase (484 aa).

The THUMP domain maps to 63-167; the sequence is DVFADRLACI…QDKLYMVERR (105 aa). ATP is bound by residues 185–186, lysine 267, glycine 289, and glutamine 298; that span reads LI. Cysteines 346 and 458 form a disulfide. Residues 406 to 484 enclose the Rhodanese domain; sequence VASGEIIIDV…GYTNVKVYRP (79 aa). Cysteine 458 serves as the catalytic Cysteine persulfide intermediate.

This sequence belongs to the ThiI family.

It localises to the cytoplasm. The catalysed reaction is [ThiI sulfur-carrier protein]-S-sulfanyl-L-cysteine + a uridine in tRNA + 2 reduced [2Fe-2S]-[ferredoxin] + ATP + H(+) = [ThiI sulfur-carrier protein]-L-cysteine + a 4-thiouridine in tRNA + 2 oxidized [2Fe-2S]-[ferredoxin] + AMP + diphosphate. It carries out the reaction [ThiS sulfur-carrier protein]-C-terminal Gly-Gly-AMP + S-sulfanyl-L-cysteinyl-[cysteine desulfurase] + AH2 = [ThiS sulfur-carrier protein]-C-terminal-Gly-aminoethanethioate + L-cysteinyl-[cysteine desulfurase] + A + AMP + 2 H(+). Its pathway is cofactor biosynthesis; thiamine diphosphate biosynthesis. Its function is as follows. Catalyzes the ATP-dependent transfer of a sulfur to tRNA to produce 4-thiouridine in position 8 of tRNAs, which functions as a near-UV photosensor. Also catalyzes the transfer of sulfur to the sulfur carrier protein ThiS, forming ThiS-thiocarboxylate. This is a step in the synthesis of thiazole, in the thiamine biosynthesis pathway. The sulfur is donated as persulfide by IscS. The chain is tRNA sulfurtransferase from Shewanella frigidimarina (strain NCIMB 400).